Here is a 239-residue protein sequence, read N- to C-terminus: Tetraspanin-9 (239 aa).

Helical transmembrane passes span 14–34 (FLFNLIFWLCGCGLLGVGIWL), 56–76 (LVIAIGTIVMVTGFLGCLGAI), and 86–106 (FFIVLLIILLAELILIILFFV). Asn-180 and Asn-181 each carry an N-linked (GlcNAc...) asparagine glycan. Residues 204-224 (VLGTVGMCLLITQILGMAFSM) traverse the membrane as a helical segment.

It belongs to the tetraspanin (TM4SF) family. Found in a complex with GP6. Post-translationally, glycosylated.

It localises to the membrane. This is Tetraspanin-9 (TSPAN9) from Ovis aries (Sheep).